We begin with the raw amino-acid sequence, 236 residues long: MLRYKRILLKLSGEALAGEDGYGINAQMLERYAEEIREVRNLGAEVALVIGGGNIFRGVSEAAANMDRVQADYMGMLATVINAIAFQDALERKGVFTRLQTAIKMEQMAEPFIRRRAIRHLEKGRVVIFGAGTGNPYFTTDTAASLRAIEIEAELIVKGTRVNGVYDSDPEKNPDAVFYPKISYQDVIRKNLRVMDMTAITLCRENLLPIVVMNMNESGNFSRLLCGEEIGTLVHA.

An ATP-binding site is contributed by 10–13 (KLSG). The interval 18-23 (GEDGYG) is involved in allosteric activation by GTP. G52 is a UMP binding site. Positions 53 and 57 each coordinate ATP. Residues D72 and 133–140 (TGNPYFTT) contribute to the UMP site. Residues T160, Y166, and D169 each coordinate ATP.

Belongs to the UMP kinase family. In terms of assembly, homohexamer.

It localises to the cytoplasm. The enzyme catalyses UMP + ATP = UDP + ADP. Its pathway is pyrimidine metabolism; CTP biosynthesis via de novo pathway; UDP from UMP (UMPK route): step 1/1. Its activity is regulated as follows. Allosterically activated by GTP. Inhibited by UTP. Catalyzes the reversible phosphorylation of UMP to UDP. This Chlorobium phaeobacteroides (strain DSM 266 / SMG 266 / 2430) protein is Uridylate kinase.